The sequence spans 245 residues: Biosynthetic peptidoglycan transglycosylase (245 aa).

The helical transmembrane segment at 24 to 44 (LVVIGAWLAGILLFSFLPVPF) threads the bilayer.

The protein belongs to the glycosyltransferase 51 family.

Its subcellular location is the cell inner membrane. The catalysed reaction is [GlcNAc-(1-&gt;4)-Mur2Ac(oyl-L-Ala-gamma-D-Glu-L-Lys-D-Ala-D-Ala)](n)-di-trans,octa-cis-undecaprenyl diphosphate + beta-D-GlcNAc-(1-&gt;4)-Mur2Ac(oyl-L-Ala-gamma-D-Glu-L-Lys-D-Ala-D-Ala)-di-trans,octa-cis-undecaprenyl diphosphate = [GlcNAc-(1-&gt;4)-Mur2Ac(oyl-L-Ala-gamma-D-Glu-L-Lys-D-Ala-D-Ala)](n+1)-di-trans,octa-cis-undecaprenyl diphosphate + di-trans,octa-cis-undecaprenyl diphosphate + H(+). Its pathway is cell wall biogenesis; peptidoglycan biosynthesis. Peptidoglycan polymerase that catalyzes glycan chain elongation from lipid-linked precursors. The protein is Biosynthetic peptidoglycan transglycosylase of Pectobacterium atrosepticum (strain SCRI 1043 / ATCC BAA-672) (Erwinia carotovora subsp. atroseptica).